The sequence spans 412 residues: MPIKILMPVLSPTMTEGNLARWLKKEGDKVNPGEVIAEIETDKATMEVEAVDEGILAKIVIPQNSQNVPVNSLIAVLSEEGEEKTDIDAFIAKNNNVSPSPKTDANLPKPHENIAKVEEQVAVIKHDASKIFASPLAKRLAKMGNIRLESVKGSGPHGRIVKQDILSYTPSTVHNKIVSRNPEEYRLVPNNNIRKIIAKRLLESKQTVPHFYLSIECNVDKLLDIREDINKSFSEDKSTRISVNDFIILAVAKALQELPNANASWGEDAIRYHNNVDISVAVAIENGLVTPIVKNANQKNIIELSREMKELIKKAKDNKLTPEEFQGGGFTISNLGMYGIKNFNAIINPPQSCIMGVGASAKRAIVKNDQVTIATIMDVTLSADHRVVDGAVGAEFLAAFKKFIESPALMLI.

In terms of domain architecture, Lipoyl-binding spans 2–78 (PIKILMPVLS…PVNSLIAVLS (77 aa)). Lysine 43 bears the N6-lipoyllysine mark. The 38-residue stretch at 132-169 (FASPLAKRLAKMGNIRLESVKGSGPHGRIVKQDILSYT) folds into the Peripheral subunit-binding (PSBD) domain. Residue histidine 385 is part of the active site.

It belongs to the 2-oxoacid dehydrogenase family. In terms of assembly, forms a 24-polypeptide structural core with octahedral symmetry. (R)-lipoate serves as cofactor.

It catalyses the reaction N(6)-[(R)-dihydrolipoyl]-L-lysyl-[protein] + acetyl-CoA = N(6)-[(R)-S(8)-acetyldihydrolipoyl]-L-lysyl-[protein] + CoA. The pyruvate dehydrogenase complex catalyzes the overall conversion of pyruvate to acetyl-CoA and CO(2). It contains multiple copies of three enzymatic components: pyruvate dehydrogenase (E1), dihydrolipoamide acetyltransferase (E2) and lipoamide dehydrogenase (E3). The chain is Dihydrolipoyllysine-residue acetyltransferase component of pyruvate dehydrogenase complex (pdhC) from Rickettsia felis (strain ATCC VR-1525 / URRWXCal2) (Rickettsia azadi).